The sequence spans 110 residues: Integration host factor subunit alpha (110 aa).

Belongs to the bacterial histone-like protein family. Heterodimer of an alpha and a beta chain.

Its function is as follows. This protein is one of the two subunits of integration host factor, a specific DNA-binding protein that functions in genetic recombination as well as in transcriptional and translational control. In Delftia acidovorans (strain DSM 14801 / SPH-1), this protein is Integration host factor subunit alpha.